Reading from the N-terminus, the 677-residue chain is Forkhead box protein P1 (677 aa).

The segment covering 1–18 has biased composition (polar residues); the sequence is MMQESGTETKSNGSAIQN. The segment at 1 to 43 is disordered; that stretch reads MMQESGTETKSNGSAIQNGSGGSNHLLECGGLREGRSNGETPA. Residue Ser-83 is modified to Phosphoserine. The span at 270–283 shows a compositional bias: polar residues; that stretch reads IMNPHASTNGQLSV. Positions 270-298 are disordered; it reads IMNPHASTNGQLSVHTPKRESLSHEEHPH. Residues 286–298 show a composition bias toward basic and acidic residues; the sequence is PKRESLSHEEHPH. A Glycyl lysine isopeptide (Lys-Gly) (interchain with G-Cter in SUMO2) cross-link involves residue Lys-287. The segment at 306 to 331 adopts a C2H2-type zinc-finger fold; that stretch reads GVCKWPGCEAVCEDFQSFLKHLNSEH. Positions 348–369 are leucine-zipper; that stretch reads VQQLELQLAKDKERLQAMMTHL. Residues Lys-372 and Lys-377 each participate in a glycyl lysine isopeptide (Lys-Gly) (interchain with G-Cter in SUMO2) cross-link. The interval 382 to 386 is CTBP1-binding; sequence PLNLV. Positions 390–403 are enriched in polar residues; it reads TLSKSASEASPQSL. Residues 390 to 422 are disordered; it reads TLSKSASEASPQSLPHTPTTPTAPLTPVTQGPS. Positions 404 to 418 are enriched in low complexity; that stretch reads PHTPTTPTAPLTPVT. A Glycyl lysine isopeptide (Lys-Gly) (interchain with G-Cter in SUMO2) cross-link involves residue Lys-442. Positions 465 to 555 form a DNA-binding region, fork-head; that stretch reads RPPFTYASLI…PQKISGNPSL (91 aa). The segment at 611 to 677 is disordered; it reads EHTNSNESDS…EDEPVNEDME (67 aa). Residues 612–623 show a composition bias toward polar residues; the sequence is HTNSNESDSSPG. The residue at position 653 (Thr-653) is a Phosphothreonine. Ser-658 is subject to Phosphoserine. Residues 667-677 show a composition bias toward acidic residues; that stretch reads YEDEPVNEDME.

In terms of assembly, forms homodimers and heterodimers with FOXP2 and FOXP4. Dimerization is required for DNA-binding. Self-associates. Interacts with CTBP1. Interacts with NCOR2 and AR. Interacts with FOXP2. Interacts with TBR1. Interacts with AURKA; this interaction facilitates the phosphorylation of FOXP1, which suppresses the expression of FBXL7. Interacts with ZMYM2. In terms of tissue distribution, isoform 8 is specifically expressed in embryonic stem cells.

It is found in the nucleus. Functionally, transcriptional repressor. Can act with CTBP1 to synergistically repress transcription but CTPBP1 is not essential. Plays an important role in the specification and differentiation of lung epithelium. Acts cooperatively with FOXP4 to regulate lung secretory epithelial cell fate and regeneration by restricting the goblet cell lineage program; the function may involve regulation of AGR2. Essential transcriptional regulator of B-cell development. Involved in regulation of cardiac muscle cell proliferation. Involved in the columnar organization of spinal motor neurons. Promotes the formation of the lateral motor neuron column (LMC) and the preganglionic motor column (PGC) and is required for respective appropriate motor axon projections. The segment-appropriate generation of spinal cord motor columns requires cooperation with other Hox proteins. Can regulate PITX3 promoter activity; may promote midbrain identity in embryonic stem cell-derived dopamine neurons by regulating PITX3. Negatively regulates the differentiation of T follicular helper cells T(FH)s. Involved in maintenance of hair follicle stem cell quiescence; the function probably involves regulation of FGF18. Represses transcription of various pro-apoptotic genes and cooperates with NF-kappa B-signaling in promoting B-cell expansion by inhibition of caspase-dependent apoptosis. Binds to CSF1R promoter elements and is involved in regulation of monocyte differentiation and macrophage functions; repression of CSF1R in monocytes seems to involve NCOR2 as corepressor. Involved in endothelial cell proliferation, tube formation and migration indicative for a role in angiogenesis; the role in neovascularization seems to implicate suppression of SEMA5B. Can negatively regulate androgen receptor signaling. Acts as a transcriptional activator of the FBXL7 promoter; this activity is regulated by AURKA. Its function is as follows. Involved in transcriptional regulation in embryonic stem cells (ESCs). Stimulates expression of transcription factors that are required for pluripotency and decreases expression of differentiation-associated genes. Has distinct DNA-binding specifities as compared to the canonical form and preferentially binds DNA with the sequence 5'-CGATACAA-3' (or closely related sequences). Promotes ESC self-renewal and pluripotency. The polypeptide is Forkhead box protein P1 (FOXP1) (Homo sapiens (Human)).